Consider the following 248-residue polypeptide: Coproheme decarboxylase (248 aa).

Fe-coproporphyrin III contacts are provided by residues arginine 130, tyrosine 144 to lysine 148, histidine 171, glutamine 184, and serine 222. Residue tyrosine 144 is part of the active site.

The protein belongs to the ChdC family. Type 1 subfamily. The cofactor is Fe-coproporphyrin III.

The catalysed reaction is Fe-coproporphyrin III + 2 H2O2 + 2 H(+) = heme b + 2 CO2 + 4 H2O. It carries out the reaction Fe-coproporphyrin III + H2O2 + H(+) = harderoheme III + CO2 + 2 H2O. It catalyses the reaction harderoheme III + H2O2 + H(+) = heme b + CO2 + 2 H2O. The protein operates within porphyrin-containing compound metabolism; protoheme biosynthesis. Involved in coproporphyrin-dependent heme b biosynthesis. Catalyzes the decarboxylation of Fe-coproporphyrin III (coproheme) to heme b (protoheme IX), the last step of the pathway. The reaction occurs in a stepwise manner with a three-propionate intermediate. This is Coproheme decarboxylase from Geobacillus thermodenitrificans (strain NG80-2).